Here is a 298-residue protein sequence, read N- to C-terminus: Porphobilinogen deaminase (298 aa).

S-(dipyrrolylmethanemethyl)cysteine is present on Cys-239.

Belongs to the HMBS family. Monomer. It depends on dipyrromethane as a cofactor.

It carries out the reaction 4 porphobilinogen + H2O = hydroxymethylbilane + 4 NH4(+). Its pathway is porphyrin-containing compound metabolism; protoporphyrin-IX biosynthesis; coproporphyrinogen-III from 5-aminolevulinate: step 2/4. Its function is as follows. Tetrapolymerization of the monopyrrole PBG into the hydroxymethylbilane pre-uroporphyrinogen in several discrete steps. This is Porphobilinogen deaminase from Ehrlichia canis (strain Jake).